A 216-amino-acid chain; its full sequence is Probable nicotinate-nucleotide adenylyltransferase (216 aa).

It belongs to the NadD family.

It carries out the reaction nicotinate beta-D-ribonucleotide + ATP + H(+) = deamido-NAD(+) + diphosphate. It functions in the pathway cofactor biosynthesis; NAD(+) biosynthesis; deamido-NAD(+) from nicotinate D-ribonucleotide: step 1/1. Catalyzes the reversible adenylation of nicotinate mononucleotide (NaMN) to nicotinic acid adenine dinucleotide (NaAD). In Marinobacter nauticus (strain ATCC 700491 / DSM 11845 / VT8) (Marinobacter aquaeolei), this protein is Probable nicotinate-nucleotide adenylyltransferase.